A 399-amino-acid polypeptide reads, in one-letter code: Chorismate synthase (399 aa).

Arg-40 and Arg-46 together coordinate NADP(+). Residues 135–137 (RAS), 256–257 (QA), Gly-301, 316–320 (KPIAT), and Arg-342 each bind FMN.

This sequence belongs to the chorismate synthase family. In terms of assembly, homotetramer. FMNH2 is required as a cofactor.

It carries out the reaction 5-O-(1-carboxyvinyl)-3-phosphoshikimate = chorismate + phosphate. Its pathway is metabolic intermediate biosynthesis; chorismate biosynthesis; chorismate from D-erythrose 4-phosphate and phosphoenolpyruvate: step 7/7. Its function is as follows. Catalyzes the anti-1,4-elimination of the C-3 phosphate and the C-6 proR hydrogen from 5-enolpyruvylshikimate-3-phosphate (EPSP) to yield chorismate, which is the branch point compound that serves as the starting substrate for the three terminal pathways of aromatic amino acid biosynthesis. This reaction introduces a second double bond into the aromatic ring system. This is Chorismate synthase from Arthrobacter sp. (strain FB24).